Consider the following 161-residue polypeptide: Allophycocyanin alpha chain (161 aa).

Asn-71 carries the post-translational modification N4-methylasparagine. Cys-81 contributes to the (2R,3E)-phycocyanobilin binding site.

It belongs to the phycobiliprotein family. Heterodimer of an alpha and a beta chain. In terms of processing, contains one covalently linked phycocyanobilin chromophore.

It localises to the plastid. The protein localises to the chloroplast thylakoid membrane. Light-harvesting photosynthetic bile pigment-protein from the phycobiliprotein complex. Allophycocyanin has a maximum absorption at approximately 650 nanometers. The polypeptide is Allophycocyanin alpha chain (apcA) (Porphyra purpurea (Red seaweed)).